The primary structure comprises 178 residues: Large ribosomal subunit protein uL6 (178 aa).

The interval 159-178 is disordered; that stretch reads GKGIRYEGEHVRRKEGKTGK.

This sequence belongs to the universal ribosomal protein uL6 family. Part of the 50S ribosomal subunit.

This protein binds to the 23S rRNA, and is important in its secondary structure. It is located near the subunit interface in the base of the L7/L12 stalk, and near the tRNA binding site of the peptidyltransferase center. This chain is Large ribosomal subunit protein uL6, found in Listeria monocytogenes serotype 4b (strain CLIP80459).